We begin with the raw amino-acid sequence, 179 residues long: ATP-dependent protease subunit HslV (179 aa).

Threonine 5 is an active-site residue. Na(+) contacts are provided by glycine 164, cysteine 167, and threonine 170.

Belongs to the peptidase T1B family. HslV subfamily. In terms of assembly, a double ring-shaped homohexamer of HslV is capped on each side by a ring-shaped HslU homohexamer. The assembly of the HslU/HslV complex is dependent on binding of ATP.

It localises to the cytoplasm. The catalysed reaction is ATP-dependent cleavage of peptide bonds with broad specificity.. Its activity is regulated as follows. Allosterically activated by HslU binding. Functionally, protease subunit of a proteasome-like degradation complex believed to be a general protein degrading machinery. The sequence is that of ATP-dependent protease subunit HslV from Verminephrobacter eiseniae (strain EF01-2).